Consider the following 594-residue polypeptide: Chitooligosaccharidolytic beta-N-acetylglucosaminidase (594 aa).

The N-terminal stretch at 1–22 (MWSRRIPLFIFGVLVLILSVAA) is a signal peptide. 2 disulfides stabilise this stretch: C31–C59 and C36–C55. N164 is a glycosylation site (N-linked (GlcNAc...) asparagine). Residues D249 and H303 each act as charge relay system in the active site. 2 disulfides stabilise this stretch: C316-C373 and C326-C331. The active-site Charge relay system is E368. A glycan (N-linked (GlcNAc...) asparagine) is linked at N375. Cystine bridges form between C478–C491 and C585–C592.

The protein belongs to the glycosyl hydrolase 20 family. Homodimer.

The enzyme catalyses Hydrolysis of terminal non-reducing N-acetyl-D-hexosamine residues in N-acetyl-beta-D-hexosaminides.. Its activity is regulated as follows. Inhibited by O-(2-acetamido-2-deoxy-D-glucopyransylidene)-amino-N-phenylcarbamate (PUGNAc). Inhibited by thiabendazole (TMG)-chitotriomycin. Inhibited by 6-(dimethylamino)-2-(2-(((5-methyl-1,3,4-thiadiazol-2-yl)methyl)amino)ethyl)- 1H-benzo[de]isoquinoline-1,3(2H)-dione (Q2), a synthesized non-carbohydrate unsymmetrical dyad of naphthalimide and thiadiazole having a dimethylamino group at C4 of the naphthalimide. Inhibited poorly by N-acetyl-glucosamine (NAG)-thiazoline (NGT), but when the thiazoline ring of NGT is replaced by a bulky substituent such as in compound 1,2-dideoxy-2'-methylamino-alpha-D-glucopyranoso-[2,1-d]-Delta2'-thiazoline (NMAGT), the inhibition constant Ki is lowered 600-fold compared to that of NGT. Inhibited by berberine, berberine analogs thalifendine and palmatine, and berberine derivative SYSU-1, but not by berberine analog tetrahydroberberine. Functionally, hydrolyzes one beta-GlcNAc unit at a time from the non-reducing ends of substrates, with a preference for shorter substrates. The 2-acetamido group and the beta-glycoside bond linkage in the substrate are required for its activity. Active with p-nitrophenyl (pNP)-beta-GlcNAc, pNP-beta-GalNAc and chitooligosaccharides (degree of polymerization from 2 to 6), but not with the complex N-glycan substrate (GlcNAcbeta-1,2Manalpha-1,6)(GlcNAcbeta-1,2Manalpha-1,3)Manbeta-1,4GlcNAcbeta-1,4GlcNAc-PA (GnGn-PA), pNP-alpha-GlcNAc or with the long polymer colloidal chitin. Involved in chitin catabolism. Involved in the degradation of old cuticle during the pupation stage. This is Chitooligosaccharidolytic beta-N-acetylglucosaminidase from Ostrinia furnacalis (Asian corn borer).